We begin with the raw amino-acid sequence, 591 residues long: Paxillin (591 aa).

M1 carries the N-acetylmethionine modification. At D2 the chain carries N-acetylserine. An LD motif 1 motif is present at residues 3–15 (DLDALLADLESTT). The tract at residues 17 to 138 (HISKRPVFLS…PSPTVMSTSL (122 aa)) is disordered. At Y31 the chain carries Phosphotyrosine; by PTK6. The span at 45–54 (VPPPVPPPPS) shows a compositional bias: pro residues. The span at 69–106 (WQPSSSRFIHQQPQSSSPVYGSSAKTSSVSNPQDSVGS) shows a compositional bias: polar residues. Phosphoserine occurs at positions 83 and 85. Y88 carries the post-translational modification Phosphotyrosine. Position 106 is a phosphoserine (S106). At Y118 the chain carries Phosphotyrosine; by PTK6. S119, S126, and S130 each carry phosphoserine. The segment covering 121–137 (PNKQKSAEPSPTVMSTS) has biased composition (polar residues). T132 carries the phosphothreonine modification. 3 positions are modified to phosphoserine: S137, S140, and S143. The LD motif 2 motif lies at 144–156 (ELDRLLLELNAVQ). Positions 159–260 (PPGFPADEAN…TQQQTRISAS (102 aa)) are disordered. Phosphotyrosine is present on Y181. The short motif at 216–228 (SVESLLDELESSV) is the LD motif 3 element. Phosphoserine is present on S230. A compositionally biased stretch (polar residues) spans 236-260 (TVNQGEMSSPQRVTSTQQQTRISAS). S244 carries the phosphoserine; by CDK5 modification. At S250 the chain carries Phosphoserine; by SLK. Residues S258, S261, S272, S303, S322, S332, and S340 each carry the phosphoserine modification. The interval 262-315 (ATRELDELMASLSDFKIQGLEQRADGERCWAAGWPRDGGRSSPGGQDEGGFMAQ) is required for binding to PARVA and ILK. The short motif at 265-276 (ELDELMASLSDF) is the LD motif 4 element. Positions 291-335 (WAAGWPRDGGRSSPGGQDEGGFMAQGKTGSSSPPGGPPKPGSQLD) are disordered. The LD motif 5 motif lies at 333–345 (QLDSMLGSLQSDL). LIM zinc-binding domains follow at residues 356–415 (GVCG…LFSP), 416–473 (RCYY…DMFA), 474–533 (PKCG…RRGS), and 534–591 (LCSG…KLFC). Residue S533 is modified to Phosphoserine.

Belongs to the paxillin family. Interacts in vitro with VCL/vinculin as well as to the SH3 domain of SRC and, when tyrosine phosphorylated, to the SH2 domain of CRK. Interacts with GIT1. Interacts with NUDT16L1/SDOS. Interacts with PTK2/FAK1. Interacts with PTK2B/PYK2. Interacts with ASAP2. Interacts with unphosphorylated ITGA4. Interacts with RNF5. Interacts with PDCD10. Interacts with NEK3, the interaction is prolactin-dependent. Interacts with PTK6. Interacts with TGFB1I1. Interacts with SORBS1. Interacts with PARVB. Interacts (via LD motif 4) with PARVA/PARVIN. Interacts (via LD motif 4) with ILK. Interacts (via cytoplasmic domain) with CEACAM1; the interaction is phosphotyrosyl-dependent. Interacts with LIMA1; this complex stabilizes actin dynamics. Interacts with CD36 (via C-terminus). Interacts with TRIM15. Interacts with PAK4; PAK4 acts as a scaffold to suppport PAXI phosphorylation at Ser-272. As to quaternary structure, interacts strongly with PTK2/FAK1 and weakly with VCL/vinculin. In terms of assembly, interacts strongly with VCL/vinculin but only weakly with PTK2/FAK1. Post-translationally, phosphorylated by MAPK1/ERK2. Phosphorylated on tyrosine residues during integrin-mediated cell adhesion, embryonic development, fibroblast transformation and following stimulation of cells by mitogens. Phosphorylation at Ser-244 by CDK5 reduces its interaction with PTK2/FAK1 in matrix-cell focal adhesions (MCFA) during oligodendrocytes (OLs) differentiation. Phosphorylation at Tyr-31 and Tyr-118 by PTK6 promote the activation of RAC1 via CRK/CrKII, thereby promoting migration and invasion. Phosphorylation at Ser-250 by SLK is required for PXN redistribution and cell motility. Phosphorylation at Ser-272 promotes focal adhesion disassembly during cell migration.

The protein resides in the cytoplasm. It is found in the cytoskeleton. It localises to the cell junction. The protein localises to the focal adhesion. Its subcellular location is the cell cortex. Cytoskeletal protein involved in actin-membrane attachment at sites of cell adhesion to the extracellular matrix (focal adhesion). Recruits other proteins such as TRIM15 to focal adhesion. The chain is Paxillin from Homo sapiens (Human).